The following is a 242-amino-acid chain: Dehydration-responsive element-binding protein 1J (242 aa).

The span at 20 to 29 shows a compositional bias: low complexity; that stretch reads SSATTAATAT. A disordered region spans residues 20–44; it reads SSATTAATATGPASPKRPAGRTKFQ. Residues 50–109 constitute a DNA-binding region (AP2/ERF); that stretch reads VFRGVRRRGRAGRWVCEVRVPGSRGDRLWVGTFDTAEEAARAHDAAMLALCGASASLNFA. The segment at 143-184 is disordered; the sequence is FQRRGSTAATATATSGDAASTAPPSSSPVLSPNDDNASSAST. The segment covering 148-184 has biased composition (low complexity); it reads STAATATATSGDAASTAPPSSSPVLSPNDDNASSAST.

It belongs to the AP2/ERF transcription factor family. ERF subfamily.

It is found in the nucleus. Transcriptional activator that binds specifically to the DNA sequence 5'-[AG]CCGAC-3'. Binding to the C-repeat/DRE element mediates high salinity- and dehydration-inducible transcription. The chain is Dehydration-responsive element-binding protein 1J (DREB1J) from Oryza sativa subsp. japonica (Rice).